A 144-amino-acid polypeptide reads, in one-letter code: Protein MIX23 (144 aa).

Alanine 2 is modified (N-acetylalanine). A coiled-coil region spans residues 82 to 120 (VKSLREEREKNLDDLTLLKRLRKEQTKLKWMQSELNVEE). Lysine 100 is modified (N6-acetyllysine).

This sequence belongs to the MIX23 family.

The protein is Protein MIX23 of Mus musculus (Mouse).